The primary structure comprises 643 residues: Tigger transposable element-derived protein 5 (643 aa).

A disordered region spans residues 1–50 (MYSAGPPAVPAPRRCRRPPPGRPMQPPRPPAPAPVPAARPPPPAPGPRPR). The segment covering 20 to 48 (PGRPMQPPRPPAPAPVPAARPPPPAPGPR) has biased composition (pro residues). One can recognise an HTH psq-type domain in the interval 52–103 (AVKMAFRKAYSIKDKLQAIERVKGGERQASVCRDFGVPGGTLRGWLKDEPKL). DNA-binding regions (H-T-H motif) lie at residues 79–99 (QASV…WLKD) and 150–183 (PLIQ…WQKR). Positions 117–190 (QRKKMRLANE…QKRHGISSQR (74 aa)) constitute an HTH CENPB-type domain. Residues 197–236 (PVAAGPAPGPPVKQEPAQPTRAGPLPDRAASTPAPAEGGY) are disordered. The DDE-1 domain occupies 238 to 358 (DEQIYNANVT…LQQKAVLLVA (121 aa)). The interval 366–395 (EARMPALEESEETRRRCRPEPTGPPEELQT) is disordered.

The protein belongs to the tigger transposable element derived protein family.

It is found in the nucleus. In Bos taurus (Bovine), this protein is Tigger transposable element-derived protein 5 (TIGD5).